Consider the following 510-residue polypeptide: Citrate lyase alpha chain (510 aa).

In terms of assembly, oligomer with a subunit composition of (alpha,beta,gamma)6.

The protein localises to the cytoplasm. It carries out the reaction citrate = oxaloacetate + acetate. The catalysed reaction is citrate + acetyl-CoA = (3S)-citryl-CoA + acetate. In terms of biological role, represents a citrate:acetyl-ACP transferase. This chain is Citrate lyase alpha chain (citF), found in Escherichia coli (strain K12).